Consider the following 413-residue polypeptide: Aminopeptidase 2 (413 aa).

The a divalent metal cation site is built by glutamate 250, glutamate 316, glutamate 340, histidine 345, histidine 378, and aspartate 380.

Belongs to the peptidase M29 family. As to quaternary structure, homodimer. Co(2+) serves as cofactor. Requires Zn(2+) as cofactor. The cofactor is Mg(2+).

In terms of biological role, broad specificity metal-dependent exopeptidase, releasing all N-terminal amino acids. In Geobacillus stearothermophilus (Bacillus stearothermophilus), this protein is Aminopeptidase 2.